The chain runs to 600 residues: CoA ligase FVEG_12633 (600 aa).

ATP-binding positions include 170 to 174 (TSGTT), H214, 321 to 323 (AAL), and 342 to 343 (ER). Positions 241–342 (NSVWTRLAAP…QLTGGNVLLE (102 aa)) are SBD1. Positions 343–420 (RYGMTEVGMA…LRGPTVFTGY (78 aa)) are SBD2. M346 lines the substrate pocket. T347, D441, R471, and K564 together coordinate ATP. K564 serves as a coordination point for oxalate.

The protein belongs to the ATP-dependent AMP-binding enzyme family.

In terms of biological role, coA ligase; part of the Fusarium detoxification of benzoxazolinone cluster 2 (FDB2) involved in the degradation of benzoxazolinones produced by the host plant. Maize, wheat, and rye produce the 2 benzoxazinone phytoanticipins 2,4-dihy-droxy-7-methoxy-1,4-benzoxazin-3-one (DIMBOA) and 2,4-dihydroxy-1,4-benzoxazin-3-one (DIBOA) that, due to their inherent instability once released, spontaneously degrade to the more stable corresponding benzoxazolinones, 6-methoxy-2-benzoxazolinone (MBOA) and 2-benzoxazolinone (BOA), respectively. The first step in the detoxification of benzoxazolinones involves the hydrolysis of the cyclic ester bond of benzoxazolinones by the FDB1 cluster gamma-lactamase MBL1 to aminophenols. MBL1 is able to convert BOA into 2-aminophenol (2-AP), as well as MBOA into 5-methoxy-2-aminophenol (2-AMP). The FDB2 cluster N-malonyltransferase FDB2/NAT1 then metabolizes aminophenols via N-malonylation to non-toxic malonamic acids. FDB2/NAT1 converts 2-AP into N-(2-hydroxyphenyl) malonamic acid (HPMA) and 2-AMP into N-(2-hydroxy-4-methoxyphenyl) malonamic acid (HMPMA). The duplicated dienlactone hydrolases DLH1 and DLH2 may provide redundant function for hydrolyzing the lactone moiety in the BOA molecule. The roles of the amidases an other enzymes encoded by the 2 FDB clusters have not been identified so far. The protein is CoA ligase FVEG_12633 of Gibberella moniliformis (strain M3125 / FGSC 7600) (Maize ear and stalk rot fungus).